The chain runs to 349 residues: D-alanine--D-alanine ligase (349 aa).

An ATP-grasp domain is found at Asn-140–Glu-345. Asn-169–Ser-224 is an ATP binding site. 3 residues coordinate Mg(2+): Asp-300, Glu-312, and Asn-314.

It belongs to the D-alanine--D-alanine ligase family. It depends on Mg(2+) as a cofactor. The cofactor is Mn(2+).

The protein localises to the cytoplasm. It catalyses the reaction 2 D-alanine + ATP = D-alanyl-D-alanine + ADP + phosphate + H(+). Its pathway is cell wall biogenesis; peptidoglycan biosynthesis. Its function is as follows. Cell wall formation. This Leptospira biflexa serovar Patoc (strain Patoc 1 / Ames) protein is D-alanine--D-alanine ligase.